The chain runs to 244 residues: Krueppel-like factor 9 (244 aa).

2 disordered regions span residues 24–51 (VPEHGGAPDAERLRLPEREVTKEHGDPG) and 80–142 (SVCS…SEKR). The segment covering 32–51 (DAERLRLPEREVTKEHGDPG) has biased composition (basic and acidic residues). Ser-122 carries the phosphoserine modification. 3 C2H2-type zinc fingers span residues 143–167 (HKCPYSGCGKVYGKSSHLKAHYRVH), 173–197 (FPCTWPDCLKKFSRSDELTRHYRTH), and 203–225 (FRCPLCEKRFMRSDHLTKHARRH).

The protein belongs to the Sp1 C2H2-type zinc-finger protein family. Interacts with ZZEF1.

It localises to the nucleus. In terms of biological role, transcription factor that binds to GC box promoter elements. Selectively activates mRNA synthesis from genes containing tandem repeats of GC boxes but represses genes with a single GC box. Acts as an epidermal circadian transcription factor regulating keratinocyte proliferation. The chain is Krueppel-like factor 9 (KLF9) from Sus scrofa (Pig).